A 446-amino-acid chain; its full sequence is StAR-related lipid transfer protein 3 (446 aa).

Topologically, residues 1–52 are cytoplasmic; that stretch reads MSKRPGDLACDLERSLPALASLGTSLSHSQSLSSHFIPPPLEKRRAISDVRR. Positions 47-218 constitute an MENTAL domain; sequence ISDVRRTFCL…YSPPESFAGS (172 aa). Residues 53–73 traverse the membrane as a helical segment; that stretch reads TFCLFVTFDLLFISLLWIIEL. Residues 74–95 lie on the Extracellular side of the membrane; it reads NTNTGIRKNLEQEVIHYSFQSS. The helical transmembrane segment at 96 to 116 threads the bilayer; that stretch reads FFDIFVLAFFRFSGLLLGYAV. Residues 117–121 lie on the Cytoplasmic side of the membrane; it reads LRLQH. Residues 122–142 traverse the membrane as a helical segment; it reads WWVIAVTTLVSSAFLIVKVIL. Topologically, residues 143–149 are extracellular; it reads SELLSKG. A helical membrane pass occupies residues 150–170; the sequence is AFGYLLPIVSFVLAWLETWFL. Residues 171–446 lie on the Cytoplasmic side of the membrane; that stretch reads DFKVLPQEAE…QRVGELGARA (276 aa). Residues 207–213 carry the FFAT motif; sequence QFYSPPE. S210, S218, and S222 each carry phosphoserine. One can recognise an START domain in the interval 231–444; it reads SFSAQEREYI…LRQRVGELGA (214 aa).

This sequence belongs to the STARD3 family. As to quaternary structure, homodimer. Interacts (via the MENTAL domain) with STARD3NL. Interacts (via phosphorylated FFAT motif) with VAPA (via MSP domain). Interacts (via phosphorylated FFAT motif) with VAPB (via MSP domain). Interacts (via phosphorylated FFAT motif) with MOSPD2 (via MSP domain); this interaction allows enrichment of MOSPD2 around endosomes. Post-translationally, phosphorylation at Ser-210 is necessary and sufficient for the direct interaction of the phosphorylated FFAT motif with the MSP domain of MOSPD2, VAPA and VAPB and allows the tethering of two membranes that participates in the formation of ER-endosome contacts. Phosphorylation of the FFAT motif leads to conformation changes. Additional phosphorylations around the core FFAT motif (QFYSPPE) are not essential but strengthen the interaction with MOSPD2, VAPA and VAPB. Phosphorylation at Ser-210 of FFAT motif drives membrane tethering between the endoplasmic reticulum and late endosomes via interaction with VAPA and VAPB that in turn allows the efficient transport of sterol mediated by the START domain.

Its subcellular location is the late endosome membrane. It carries out the reaction cholesterol(in) = cholesterol(out). In terms of biological role, sterol-binding protein that mediates cholesterol transport from the endoplasmic reticulum to endosomes. The sterol transport mechanism is triggered by phosphorylation of FFAT motif that leads to membrane tethering between the endoplasmic reticulum and late endosomes via interaction with VAPA and VAPB. Acts as a lipid transfer protein that redirects sterol to the endosome at the expense of the cell membrane and favors membrane formation inside endosomes. May also mediate cholesterol transport between other membranes, such as mitochondria membrane or cell membrane. However, such results need additional experimental evidences; probably mainly mediates cholesterol transport from the endoplasmic reticulum to endosomes. Does not activate transcriptional cholesterol sensing. Able to bind other lipids, such as lutein, a xanthophyll carotenoids that form the macular pigment of the retina. The sequence is that of StAR-related lipid transfer protein 3 from Mus musculus (Mouse).